Reading from the N-terminus, the 512-residue chain is Circadian clock oscillator protein KaiC (512 aa).

KaiC domains are found at residues 1–243 and 257–512; these read MQFP…ISIF and VRVS…SSED. ATP is bound by residues Gly-45, Thr-46, Gly-47, Lys-48, Thr-49, Ser-85, Lys-220, Leu-221, Arg-222, Thr-224, His-226, Thr-286, Gly-287, Thr-288, Gly-289, Lys-290, Thr-291, and Leu-292. A Mg(2+)-binding site is contributed by Thr-49. Position 291 (Thr-291) interacts with Mg(2+). Position 314 (Glu-314) interacts with Mg(2+). Trp-327 is a binding site for ATP. Ser-427 is subject to Phosphoserine; by autocatalysis. Thr-428 bears the Phosphothreonine; by autocatalysis mark. Residues Arg-447, Lys-453, Met-454, Arg-455, Ser-457, His-459, and Lys-461 each coordinate ATP.

Belongs to the KaiC family. Homohexamer; hexamerization is dependent on ATP-binding. The KaiABC complex composition changes during the circadian cycle to control KaiC phosphorylation. Complexes KaiC(6), KaiA(2-4):KaiC(6), KaiB(6):KaiC(6) and KaiC(6):KaiB(6):KaiA(12) are among the most important forms, many form cooperatively. KaiC interacts with SasA, activating its autokinase function and leading to RpaA activation. It depends on Mg(2+) as a cofactor. Post-translationally, phosphorylated on serine and threonine residues by autocatalysis. Has a 4 step phosphorylation cycle; the autokinase acts first on Thr-428, then Ser-427. When Ser-427 is modified KaiC switches to an autophosphatase mode, acting first on phospho-Thr-428 then phospho-Ser-427.

The enzyme catalyses L-seryl-[protein] + ATP = O-phospho-L-seryl-[protein] + ADP + H(+). The catalysed reaction is L-threonyl-[protein] + ATP = O-phospho-L-threonyl-[protein] + ADP + H(+). It carries out the reaction ATP + H2O = ADP + phosphate + H(+). Its activity is regulated as follows. The interaction with KaiA enhances its phosphorylation status, while the interaction with KaiB decreases it. Its function is as follows. Central component of the KaiABC oscillator complex, which constitutes the main circadian regulator in cyanobacteria. Complex composition changes during the circadian cycle to control KaiC phosphorylation. KaiA stimulates KaiC autophosphorylation, while KaiB sequesters KaiA, leading to KaiC autodephosphorylation. Clock output pathways impact the RpaA transcriptional regulator. KaiC enhances the autophosphorylation activity of SasA, which then transfers its phosphate group to RpaA to activate it. KaiB and KaiC together enhance the phospho-RpaA dephosphatase activity of CikA. Functionally, has a weak, temperature-independent ATPase activity; ATPase activity defines the circadian period. The phosphorylation state of KaiC modulates its ATPase activity and effects KaiB binding. This Parasynechococcus marenigrum (strain WH8102) protein is Circadian clock oscillator protein KaiC.